We begin with the raw amino-acid sequence, 881 residues long: Formin-like protein 10 (881 aa).

The signal sequence occupies residues 1-24 (MAMKRVVFLLLLVAASALVKSSRG). Residues 194 to 223 (LTPSNSLNMEPPSPYYPSKSAHKHQGVAPP) are disordered. A helical membrane pass occupies residues 236–256 (VVLIAVLPTAALSFLAAFLCF). Over residues 333 to 346 (TLVTGGTQENNATS) the composition is skewed to polar residues. 3 disordered regions span residues 333 to 427 (TLVT…EVNA), 683 to 703 (ENGR…ESLQ), and 837 to 881 (ASQK…DSND). The span at 351 to 390 (LMPPPPPPPPPPPPPPPPPPPRPPPPPPPIKKGAPPPAPP) shows a compositional bias: pro residues. Positions 400–424 (LSPTESSRSEESSASELASESSETE) are enriched in low complexity. Positions 422–854 (ETEVNAPRAK…KSQANGNSNN (433 aa)) constitute an FH2 domain. Over residues 692-701 (STSDDNSNES) the composition is skewed to polar residues. The segment covering 846–865 (SQANGNSNNPSSQSNPQEQQ) has biased composition (low complexity). A compositionally biased stretch (basic and acidic residues) spans 870-881 (LDHHFDSSDSND).

This sequence belongs to the formin-like family. Class-I subfamily.

Its subcellular location is the membrane. This is Formin-like protein 10 (FH10) from Oryza sativa subsp. japonica (Rice).